A 373-amino-acid polypeptide reads, in one-letter code: Anhydro-N-acetylmuramic acid kinase (373 aa).

12–19 serves as a coordination point for ATP; that stretch reads GTSLDGVD.

The protein belongs to the anhydro-N-acetylmuramic acid kinase family.

It carries out the reaction 1,6-anhydro-N-acetyl-beta-muramate + ATP + H2O = N-acetyl-D-muramate 6-phosphate + ADP + H(+). The protein operates within amino-sugar metabolism; 1,6-anhydro-N-acetylmuramate degradation. It functions in the pathway cell wall biogenesis; peptidoglycan recycling. Functionally, catalyzes the specific phosphorylation of 1,6-anhydro-N-acetylmuramic acid (anhMurNAc) with the simultaneous cleavage of the 1,6-anhydro ring, generating MurNAc-6-P. Is required for the utilization of anhMurNAc either imported from the medium or derived from its own cell wall murein, and thus plays a role in cell wall recycling. This is Anhydro-N-acetylmuramic acid kinase from Serratia proteamaculans (strain 568).